A 605-amino-acid chain; its full sequence is Adenine deaminase (605 aa).

Belongs to the metallo-dependent hydrolases superfamily. Adenine deaminase family. Mn(2+) is required as a cofactor.

The catalysed reaction is adenine + H2O + H(+) = hypoxanthine + NH4(+). The polypeptide is Adenine deaminase (Mesorhizobium japonicum (strain LMG 29417 / CECT 9101 / MAFF 303099) (Mesorhizobium loti (strain MAFF 303099))).